We begin with the raw amino-acid sequence, 419 residues long: Tyrosine--tRNA ligase (419 aa).

Tyr-34 provides a ligand contact to L-tyrosine. The 'HIGH' region signature appears at 39–48 (PTADSLHIGH). L-tyrosine-binding residues include Tyr-169, Gln-173, and Asp-176. The 'KMSKS' region signature appears at 230–234 (KFGKT). Lys-233 lines the ATP pocket. The 68-residue stretch at 352–419 (VPLVELLVSA…KKKYYLIRYA (68 aa)) folds into the S4 RNA-binding domain.

Belongs to the class-I aminoacyl-tRNA synthetase family. TyrS type 1 subfamily. Homodimer.

It is found in the cytoplasm. The catalysed reaction is tRNA(Tyr) + L-tyrosine + ATP = L-tyrosyl-tRNA(Tyr) + AMP + diphosphate + H(+). Catalyzes the attachment of tyrosine to tRNA(Tyr) in a two-step reaction: tyrosine is first activated by ATP to form Tyr-AMP and then transferred to the acceptor end of tRNA(Tyr). The protein is Tyrosine--tRNA ligase (tyrS) of Geobacillus stearothermophilus (Bacillus stearothermophilus).